Here is a 475-residue protein sequence, read N- to C-terminus: Aspartyl/glutamyl-tRNA(Asn/Gln) amidotransferase subunit B (475 aa).

This sequence belongs to the GatB/GatE family. GatB subfamily. As to quaternary structure, heterotrimer of A, B and C subunits.

It carries out the reaction L-glutamyl-tRNA(Gln) + L-glutamine + ATP + H2O = L-glutaminyl-tRNA(Gln) + L-glutamate + ADP + phosphate + H(+). The catalysed reaction is L-aspartyl-tRNA(Asn) + L-glutamine + ATP + H2O = L-asparaginyl-tRNA(Asn) + L-glutamate + ADP + phosphate + 2 H(+). Allows the formation of correctly charged Asn-tRNA(Asn) or Gln-tRNA(Gln) through the transamidation of misacylated Asp-tRNA(Asn) or Glu-tRNA(Gln) in organisms which lack either or both of asparaginyl-tRNA or glutaminyl-tRNA synthetases. The reaction takes place in the presence of glutamine and ATP through an activated phospho-Asp-tRNA(Asn) or phospho-Glu-tRNA(Gln). In Chlorobium chlorochromatii (strain CaD3), this protein is Aspartyl/glutamyl-tRNA(Asn/Gln) amidotransferase subunit B.